The following is a 905-amino-acid chain: Heme/hemopexin-binding protein (905 aa).

Positions 1–21 (MYKLNVISLIILTTYTGATYA) are cleaved as a signal peptide.

The protein localises to the secreted. Its function is as follows. Binds heme/hemopexin complexes. In Haemophilus influenzae (strain ATCC 51907 / DSM 11121 / KW20 / Rd), this protein is Heme/hemopexin-binding protein (hxuA).